The sequence spans 440 residues: Ribulose bisphosphate carboxylase large chain (440 aa).

At Lys-4 the chain carries N6,N6,N6-trimethyllysine. 2 residues coordinate substrate: Asn-113 and Thr-163. The Proton acceptor role is filled by Lys-165. Lys-167 provides a ligand contact to substrate. The Mg(2+) site is built by Lys-191, Asp-193, and Glu-194. Lys-191 bears the N6-carboxylysine mark. The active-site Proton acceptor is His-284. Substrate-binding residues include Arg-285, His-317, and Ser-369.

This sequence belongs to the RuBisCO large chain family. Type I subfamily. In terms of assembly, heterohexadecamer of 8 large chains and 8 small chains; disulfide-linked. The disulfide link is formed within the large subunit homodimers. Requires Mg(2+) as cofactor. Post-translationally, the disulfide bond which can form in the large chain dimeric partners within the hexadecamer appears to be associated with oxidative stress and protein turnover.

Its subcellular location is the plastid. It is found in the chloroplast. It carries out the reaction 2 (2R)-3-phosphoglycerate + 2 H(+) = D-ribulose 1,5-bisphosphate + CO2 + H2O. The enzyme catalyses D-ribulose 1,5-bisphosphate + O2 = 2-phosphoglycolate + (2R)-3-phosphoglycerate + 2 H(+). In terms of biological role, ruBisCO catalyzes two reactions: the carboxylation of D-ribulose 1,5-bisphosphate, the primary event in carbon dioxide fixation, as well as the oxidative fragmentation of the pentose substrate in the photorespiration process. Both reactions occur simultaneously and in competition at the same active site. The chain is Ribulose bisphosphate carboxylase large chain from Matteuccia struthiopteris (European ostrich fern).